The sequence spans 423 residues: Enolase (423 aa).

Q162 contacts (2R)-2-phosphoglycerate. The Proton donor role is filled by E204. Residues D241, E284, and D311 each coordinate Mg(2+). Residues K336, R365, S366, and K387 each contribute to the (2R)-2-phosphoglycerate site. Residue K336 is the Proton acceptor of the active site.

Belongs to the enolase family. Requires Mg(2+) as cofactor.

It localises to the cytoplasm. It is found in the secreted. The protein resides in the cell surface. The enzyme catalyses (2R)-2-phosphoglycerate = phosphoenolpyruvate + H2O. The protein operates within carbohydrate degradation; glycolysis; pyruvate from D-glyceraldehyde 3-phosphate: step 4/5. Catalyzes the reversible conversion of 2-phosphoglycerate (2-PG) into phosphoenolpyruvate (PEP). It is essential for the degradation of carbohydrates via glycolysis. The protein is Enolase of Bartonella bacilliformis (strain ATCC 35685 / KC583 / Herrer 020/F12,63).